Here is a 160-residue protein sequence, read N- to C-terminus: Transcription antitermination protein NusB (160 aa).

It belongs to the NusB family.

Functionally, involved in transcription antitermination. Required for transcription of ribosomal RNA (rRNA) genes. Binds specifically to the boxA antiterminator sequence of the ribosomal RNA (rrn) operons. This is Transcription antitermination protein NusB from Rhizobium etli (strain ATCC 51251 / DSM 11541 / JCM 21823 / NBRC 15573 / CFN 42).